The chain runs to 213 residues: Orotate phosphoribosyltransferase (213 aa).

Lysine 26 serves as a coordination point for 5-phospho-alpha-D-ribose 1-diphosphate. An orotate-binding site is contributed by 34-35 (FF). 5-phospho-alpha-D-ribose 1-diphosphate is bound by residues 72–73 (YK), arginine 99, lysine 100, lysine 103, histidine 105, and 124–132 (DDVITAGTA). Residues threonine 128 and arginine 156 each contribute to the orotate site.

It belongs to the purine/pyrimidine phosphoribosyltransferase family. PyrE subfamily. In terms of assembly, homodimer. Mg(2+) is required as a cofactor.

The enzyme catalyses orotidine 5'-phosphate + diphosphate = orotate + 5-phospho-alpha-D-ribose 1-diphosphate. Its pathway is pyrimidine metabolism; UMP biosynthesis via de novo pathway; UMP from orotate: step 1/2. In terms of biological role, catalyzes the transfer of a ribosyl phosphate group from 5-phosphoribose 1-diphosphate to orotate, leading to the formation of orotidine monophosphate (OMP). This Shigella flexneri protein is Orotate phosphoribosyltransferase.